The sequence spans 520 residues: Genome polyprotein (520 aa).

The residue at position 2 (serine 2) is an N-acetylserine; by host. The segment at 2-23 (STNPKPQRKTKRNTNRRPQDVK) is interaction with STAT1. The segment at 2-58 (STNPKPQRKTKRNTNRRPQDVKFPGGGQIVGGVYLLTRRGPRLGVRATRKTSERSQP) is interaction with EIF2AK2/PKR. Residues 2-59 (STNPKPQRKTKRNTNRRPQDVKFPGGGQIVGGVYLLTRRGPRLGVRATRKTSERSQPR) form an interaction with DDX3X region. Residues 2–75 (STNPKPQRKT…PKARRPEGRA (74 aa)) are disordered. Residues 2 to 168 (STNPKPQRKT…EDGVNYATGN (167 aa)) lie on the Cytoplasmic side of the membrane. 2 short sequence motifs (nuclear localization signal) span residues 5-13 (PKPQRKTKR) and 38-43 (TRRGPR). The span at 7-16 (PQRKTKRNTN) shows a compositional bias: basic residues. Residue serine 53 is modified to Phosphoserine; by host. Short sequence motifs (nuclear localization signal) lie at residues 58-64 (PRGRRQP) and 66-71 (PKARRP). The segment covering 58–68 (PRGRRQPIPKA) has biased composition (basic residues). Serine 99 is modified (phosphoserine; by host). Residues 112-152 (PRRRSRNLGKVIDTLTCGFADLMGYIPLVGAPLGGASRALA) form an important for endoplasmic reticulum and mitochondrial localization region. Serine 116 is modified (phosphoserine; by host PKA). An interaction with APOA2 region spans residues 122–173 (VIDTLTCGFADLMGYIPLVGAPLGGASRALAHGVRVLEDGVNYATGNLPGCS). An important for lipid droplets localization region spans residues 164–167 (YATG). The chain crosses the membrane as a helical span at residues 169–189 (LPGCSFSIFLSALMSCLTTPA). Positions 178-191 (LSALMSCLTTPASA) are cleaved as a propeptide — ER anchor for the core protein, removed in mature form by host signal peptidase. The Lumenal portion of the chain corresponds to 190-358 (SAYEVRNVSG…AGAHWGVLAG (169 aa)). Asparagine 196, asparagine 209, asparagine 234, and asparagine 250 each carry an N-linked (GlcNAc...) asparagine; by host glycan. Residues 265–296 (LVGAATLCSAMYVGDLCGSVFLVSQLFTFSPR) form an important for fusion region. Asparagine 305 is a glycosylation site (N-linked (GlcNAc...) asparagine; by host). The chain crosses the membrane as a helical span at residues 359–379 (LAYYSMVGNWAKVLIVMLLFA). At 380-520 (GVDGANTHTV…TPSPVVVGTT (141 aa)) the chain is on the lumenal side. The HVR1 stretch occupies residues 385-411 (NTHTVGGTEGFATQRLTSLFALGPSQK). Residue asparagine 418 is glycosylated (N-linked (GlcNAc...) asparagine; by host). N-linked (GlcNAc...) (high mannose) asparagine; by host glycosylation is found at asparagine 424, asparagine 431, and asparagine 449. Cysteine 453 and cysteine 460 are disulfide-bonded. The segment at 474–479 (TYAEPS) is HVR2. Residues 480–493 (ISEQRPYCWHYAPR) form a CD81-binding 1 region. 2 cysteine pairs are disulfide-bonded: cysteine 487-cysteine 495 and cysteine 504-cysteine 509.

Belongs to the hepacivirus polyprotein family. As to quaternary structure, homooligomer. Interacts with E1 (via C-terminus). Interacts with the non-structural protein 5A. Interacts (via N-terminus) with host STAT1 (via SH2 domain); this interaction results in decreased STAT1 phosphorylation and ubiquitin-mediated proteasome-dependent STAT1 degradation, leading to decreased IFN-stimulated gene transcription. Interacts with host STAT3; this interaction constitutively activates STAT3. Interacts with host LTBR receptor. Interacts with host TNFRSF1A receptor and possibly induces apoptosis. Interacts with host HNRPK. Interacts with host YWHAE. Interacts with host UBE3A/E6AP. Interacts with host DDX3X. Interacts with host APOA2. Interacts with host RXRA protein. Interacts with host SP110 isoform 3/Sp110b; this interaction sequesters the transcriptional corepressor SP110 away from the nucleus. Interacts with host CREB3 nuclear transcription protein; this interaction triggers cell transformation. Interacts with host ACY3. Interacts with host C1QR1. Interacts with host RBM24; this interaction, which enhances the interaction of the mature core protein with 5'-UTR, may inhibit viral translation and favor replication. Interacts with host EIF2AK2/PKR; this interaction induces the autophosphorylation of EIF2AK2. Part of the viral assembly initiation complex composed of NS2, E1, E2, NS3, NS4A, NS5A and the mature core protein. Forms a heterodimer with envelope glycoprotein E2. Interacts with mature core protein. Interacts with protease NS2. The heterodimer E1/E2 interacts with host CLDN1; this interaction plays a role in viral entry into host cell. Interacts with host SPSB2 (via C-terminus). Part of the viral assembly initiation complex composed of NS2, E1, E2, NS3, NS4A, NS5A and the mature core protein. In terms of assembly, forms a heterodimer with envelope glycoprotein E1. Interacts with host CD81 and SCARB1 receptors; these interactions play a role in viral entry into host cell. Interacts with host EIF2AK2/PKR; this interaction inhibits EIF2AK2 and probably allows the virus to evade the innate immune response. Interacts with host CD209/DC-SIGN and CLEC4M/DC-SIGNR. Interact with host SPCS1; this interaction is essential for viral particle assembly. Interacts with protease NS2. The heterodimer E1/E2 interacts with host CLDN1; this interaction plays a role in viral entry into host cell. Part of the viral assembly initiation complex composed of NS2, E1, E2, NS3, NS4A, NS5A and the mature core protein. Specific enzymatic cleavages in vivo yield mature proteins. The structural proteins, core, E1, E2 and p7 are produced by proteolytic processing by host signal peptidases. The core protein precursor is synthesized as a 23 kDa, which is retained in the ER membrane through the hydrophobic signal peptide. Cleavage by the signal peptidase releases the 21 kDa mature core protein. The cleavage of the core protein precursor occurs between aminoacids 176 and 188 but the exact cleavage site is not known. Some degraded forms of the core protein appear as well during the course of infection. The other proteins (p7, NS2, NS3, NS4A, NS4B, NS5A and NS5B) are cleaved by the viral proteases. Autoprocessing between NS2 and NS3 is mediated by the NS2 cysteine protease catalytic domain and regulated by the NS3 N-terminal domain. In terms of processing, phosphorylated by host PKC and PKA. Post-translationally, ubiquitinated; mediated by UBE3A and leading to core protein subsequent proteasomal degradation. Highly N-glycosylated.

It is found in the host endoplasmic reticulum membrane. Its subcellular location is the host mitochondrion membrane. It localises to the virion. The protein localises to the host cytoplasm. The protein resides in the host nucleus. It is found in the host lipid droplet. Its subcellular location is the virion membrane. In terms of biological role, packages viral RNA to form a viral nucleocapsid, and promotes virion budding. Participates in the viral particle production as a result of its interaction with the non-structural protein 5A. Binds RNA and may function as a RNA chaperone to induce the RNA structural rearrangements taking place during virus replication. Modulates viral translation initiation by interacting with viral IRES and 40S ribosomal subunit. Affects various cell signaling pathways, host immunity and lipid metabolism. Prevents the establishment of cellular antiviral state by blocking the interferon-alpha/beta (IFN-alpha/beta) and IFN-gamma signaling pathways and by blocking the formation of phosphorylated STAT1 and promoting ubiquitin-mediated proteasome-dependent degradation of STAT1. Activates STAT3 leading to cellular transformation. Regulates the activity of cellular genes, including c-myc and c-fos. May repress the promoter of p53, and sequester CREB3 and SP110 isoform 3/Sp110b in the cytoplasm. Represses cell cycle negative regulating factor CDKN1A, thereby interrupting an important check point of normal cell cycle regulation. Targets transcription factors involved in the regulation of inflammatory responses and in the immune response: suppresses TNF-induced NF-kappa-B activation, and activates AP-1. Binds to dendritic cells (DCs) via C1QR1, resulting in down-regulation of T-lymphocytes proliferation. Alters lipid metabolism by interacting with hepatocellular proteins involved in lipid accumulation and storage. Induces up-regulation of FAS promoter activity, and thereby contributes to the increased triglyceride accumulation in hepatocytes (steatosis). Functionally, forms a heterodimer with envelope glycoprotein E2, which mediates virus attachment to the host cell, virion internalization through clathrin-dependent endocytosis and fusion with host membrane. Fusion with the host cell is most likely mediated by both E1 and E2, through conformational rearrangements of the heterodimer required for fusion rather than a classical class II fusion mechanism. E1/E2 heterodimer binds host apolipoproteins such as APOB and ApoE thereby forming a lipo-viro-particle (LVP). APOE associated to the LVP allows the initial virus attachment to cell surface receptors such as the heparan sulfate proteoglycans (HSPGs), syndecan-1 (SDC1), syndecan-1 (SDC2), the low-density lipoprotein receptor (LDLR) and scavenger receptor class B type I (SCARB1). The cholesterol transfer activity of SCARB1 allows E2 exposure and binding of E2 to SCARB1 and the tetraspanin CD81. E1/E2 heterodimer binding on CD81 activates the epithelial growth factor receptor (EGFR) signaling pathway. Diffusion of the complex E1-E2-EGFR-SCARB1-CD81 to the cell lateral membrane allows further interaction with Claudin 1 (CLDN1) and occludin (OCLN) to finally trigger HCV entry. Forms a heterodimer with envelope glycoprotein E1, which mediates virus attachment to the host cell, virion internalization through clathrin-dependent endocytosis and fusion with host membrane. Fusion with the host cell is most likely mediated by both E1 and E2, through conformational rearrangements of the heterodimer required for fusion rather than a classical class II fusion mechanism. The interaction between envelope glycoprotein E2 and host apolipoprotein E/APOE allows the proper assembly, maturation and infectivity of the viral particles. This interaction is probably promoted via the up-regulation of cellular autophagy by the virus. E1/E2 heterodimer binds host apolipoproteins such as APOB and APOE thereby forming a lipo-viro-particle (LVP). APOE associated to the LVP allows the initial virus attachment to cell surface receptors such as the heparan sulfate proteoglycans (HSPGs), syndecan-1 (SDC1), syndecan-1 (SDC2), the low-density lipoprotein receptor (LDLR) and scavenger receptor class B type I (SCARB1). The cholesterol transfer activity of SCARB1 allows E2 exposure and binding of E2 to SCARB1 and the tetraspanin CD81. E1/E2 heterodimer binding on CD81 activates the epithelial growth factor receptor (EGFR) signaling pathway. Diffusion of the complex E1-E2-EGFR-SCARB1-CD81 to the cell lateral membrane allows further interaction with Claudin 1 (CLDN1) and occludin (OCLN) to finally trigger HCV entry. Inhibits host EIF2AK2/PKR activation, preventing the establishment of an antiviral state. Viral ligand for CD209/DC-SIGN and CLEC4M/DC-SIGNR, which are respectively found on dendritic cells (DCs), and on liver sinusoidal endothelial cells and macrophage-like cells of lymph node sinuses. These interactions allow the capture of circulating HCV particles by these cells and subsequent facilitated transmission to permissive cells such as hepatocytes and lymphocyte subpopulations. The protein is Genome polyprotein of Hepatitis C virus (isolate HCV-KF) (HCV).